The primary structure comprises 187 residues: Ribonuclease HII (187 aa).

Positions 1 to 187 (MICGTDEAGR…NPVKRLLANL (187 aa)) constitute an RNase H type-2 domain. A divalent metal cation-binding residues include Asp-6, Glu-7, and Asp-98.

This sequence belongs to the RNase HII family. The cofactor is Mn(2+). It depends on Mg(2+) as a cofactor.

It is found in the cytoplasm. It carries out the reaction Endonucleolytic cleavage to 5'-phosphomonoester.. Functionally, endonuclease that specifically degrades the RNA of RNA-DNA hybrids. This is Ribonuclease HII from Idiomarina loihiensis (strain ATCC BAA-735 / DSM 15497 / L2-TR).